Consider the following 333-residue polypeptide: Gap junction alpha-4 protein (333 aa).

Topologically, residues 1–20 (MGDWGFLEKLLDQVQEHSTV) are cytoplasmic. Residues 21–40 (VGKIWLTVLFIFRILILGLA) traverse the membrane as a helical segment. Over 41 to 76 (GESVWGDEQSDFECNTAQPGCTNVCYDQAFPISHIR) the chain is Extracellular. Residues 77–99 (YWVLQFLFVSTPTLIYLGHVIYL) form a helical membrane-spanning segment. Topologically, residues 100 to 148 (SRREERLRQKEGELRALPSKDLHVERALAAIEHQMAKISVAEDGRLRIR) are cytoplasmic. A helical membrane pass occupies residues 149–171 (GALMGTYVVSVLCKSVLEAGFLY). Residues 172–208 (GQWRLYGWTMEPVFVCQRAPCPHIVDCYVSRPTEKTI) lie on the Extracellular side of the membrane. A helical transmembrane segment spans residues 209 to 231 (FIIFMLVVGVISLVLNLLELVHL). Residues 232–333 (LCRCVSREIK…NSSASKKQYV (102 aa)) are Cytoplasmic-facing. The segment at 292-333 (ANLTTEERLTSSRPPPFVNTAPQGGRKSPSRPNSSASKKQYV) is disordered. Residues 321 to 333 (SRPNSSASKKQYV) show a composition bias toward polar residues.

The protein belongs to the connexin family. Alpha-type (group II) subfamily. As to quaternary structure, a connexon is composed of a hexamer of connexins. Highly expressed in lung.

Its subcellular location is the cell membrane. The protein resides in the cell junction. It localises to the gap junction. In terms of biological role, one gap junction consists of a cluster of closely packed pairs of transmembrane channels, the connexons, through which materials of low MW diffuse from one cell to a neighboring cell. The polypeptide is Gap junction alpha-4 protein (Gja4) (Mus musculus (Mouse)).